Reading from the N-terminus, the 390-residue chain is MTAVSLGMPAVPPPPLASRRASRQIMVGPVPVGGGAPVSVQSMTTTLTADVNATLQQIAELTAAGCQIVRVAVPSQDDVEALPAIARKSQLPVIADIHFQPRYVFAAIEAGCAAVRVNPGNIRQFDDKVKEIAKAAGDAGVPIRIGVNAGSLDKRLLAKHGKATAEALVESALWECSLFEEHGFRDIKISVKHNDPVVMVRAYRQLAEACDYPLHLGVTEAGPAFQGTVKSAVAFGALLAEGIGDTIRVSLSAPPVEEIKVGTAILESLGLRERGLEIVSCPSCGRAQVDVYKLAEEVTAGLEGLPVPLRVAVMGCVVNGPGEAREADLGVASGNGKGQIFVKGKVIKTVPEGQIVETLIEEALRLADEMGAELPDELRSLVGGATVTVH.

[4Fe-4S] cluster-binding residues include Cys-281, Cys-284, Cys-316, and Glu-323.

This sequence belongs to the IspG family. Requires [4Fe-4S] cluster as cofactor.

It carries out the reaction (2E)-4-hydroxy-3-methylbut-2-enyl diphosphate + oxidized [flavodoxin] + H2O + 2 H(+) = 2-C-methyl-D-erythritol 2,4-cyclic diphosphate + reduced [flavodoxin]. It participates in isoprenoid biosynthesis; isopentenyl diphosphate biosynthesis via DXP pathway; isopentenyl diphosphate from 1-deoxy-D-xylulose 5-phosphate: step 5/6. Its function is as follows. Converts 2C-methyl-D-erythritol 2,4-cyclodiphosphate (ME-2,4cPP) into 1-hydroxy-2-methyl-2-(E)-butenyl 4-diphosphate. In Salinispora arenicola (strain CNS-205), this protein is 4-hydroxy-3-methylbut-2-en-1-yl diphosphate synthase (flavodoxin).